Reading from the N-terminus, the 255-residue chain is Cullin-like protein 3 (255 aa).

The protein belongs to the cullin family.

The protein is Cullin-like protein 3 of Arabidopsis thaliana (Mouse-ear cress).